Consider the following 408-residue polypeptide: Peptidase T (408 aa).

His-78 contributes to the Zn(2+) binding site. Asp-80 is a catalytic residue. Asp-141 contacts Zn(2+). The active-site Proton acceptor is Glu-175. Zn(2+)-binding residues include Glu-176, Asp-198, and His-380.

The protein belongs to the peptidase M20B family. Requires Zn(2+) as cofactor.

It localises to the cytoplasm. It catalyses the reaction Release of the N-terminal residue from a tripeptide.. Cleaves the N-terminal amino acid of tripeptides. This Clostridium acetobutylicum (strain ATCC 824 / DSM 792 / JCM 1419 / IAM 19013 / LMG 5710 / NBRC 13948 / NRRL B-527 / VKM B-1787 / 2291 / W) protein is Peptidase T.